The sequence spans 127 residues: Aspartate 1-decarboxylase (127 aa).

Ser-25 serves as the catalytic Schiff-base intermediate with substrate; via pyruvic acid. Ser-25 is modified (pyruvic acid (Ser)). Residue Thr-57 coordinates substrate. Catalysis depends on Tyr-58, which acts as the Proton donor. 73-75 (GAA) provides a ligand contact to substrate.

This sequence belongs to the PanD family. In terms of assembly, heterooctamer of four alpha and four beta subunits. Pyruvate is required as a cofactor. Is synthesized initially as an inactive proenzyme, which is activated by self-cleavage at a specific serine bond to produce a beta-subunit with a hydroxyl group at its C-terminus and an alpha-subunit with a pyruvoyl group at its N-terminus.

The protein resides in the cytoplasm. The catalysed reaction is L-aspartate + H(+) = beta-alanine + CO2. It functions in the pathway cofactor biosynthesis; (R)-pantothenate biosynthesis; beta-alanine from L-aspartate: step 1/1. Functionally, catalyzes the pyruvoyl-dependent decarboxylation of aspartate to produce beta-alanine. This is Aspartate 1-decarboxylase from Neisseria gonorrhoeae (strain ATCC 700825 / FA 1090).